Here is a 114-residue protein sequence, read N- to C-terminus: Hemerythrin subunit 1 (114 aa).

Fe cation contacts are provided by His26, His55, Glu59, His74, His78, His102, and Asp107.

The protein belongs to the hemerythrin family.

Hemerythrin is a respiratory protein in blood cells of certain marine worms. The oxygen-binding site in each chain contains two iron atoms. This Golfingia vulgaris (Marine worm) protein is Hemerythrin subunit 1.